The chain runs to 234 residues: Transcriptional activator protein TraR (234 aa).

The HTH luxR-type domain occupies 167 to 232; sequence TAEDAAWLDP…HLTALAIRRK (66 aa). The H-T-H motif DNA-binding region spans 191 to 210; it reads MEEIADVEGVKYNSVRVKLR.

The protein belongs to the autoinducer-regulated transcriptional regulatory protein family.

Its function is as follows. Positive regulation of conjugal transfer of Ti plasmids. TraR activates target genes in the presence of AAI and also activates traR and traI themselves. The polypeptide is Transcriptional activator protein TraR (traR) (Rhizobium radiobacter (Agrobacterium tumefaciens)).